We begin with the raw amino-acid sequence, 70 residues long: MPILSKYSNEQVEQIVDQLIDVLTQHNAPVDLSLMCLGNSITHILKEHVPTGKRQAVTENFAKALAQSVK.

Belongs to the UPF0352 family.

This Pseudoalteromonas translucida (strain TAC 125) protein is UPF0352 protein PSHAa1818.